Here is a 209-residue protein sequence, read N- to C-terminus: Small ribosomal subunit protein uS4 (209 aa).

Basic residues predominate over residues 1–13 (MSTKSRTRSKTRL). 2 disordered regions span residues 1–20 (MSTK…LGIP) and 28–49 (YLEK…QDSD). The S4 RNA-binding domain occupies 95 to 160 (QRLDALVVRS…TEPFQVAAAG (66 aa)).

This sequence belongs to the universal ribosomal protein uS4 family. As to quaternary structure, part of the 30S ribosomal subunit. Contacts protein S5. The interaction surface between S4 and S5 is involved in control of translational fidelity.

Functionally, one of the primary rRNA binding proteins, it binds directly to 16S rRNA where it nucleates assembly of the body of the 30S subunit. With S5 and S12 plays an important role in translational accuracy. This Clavibacter sepedonicus (Clavibacter michiganensis subsp. sepedonicus) protein is Small ribosomal subunit protein uS4.